The following is a 131-amino-acid chain: UPF0102 protein Ent638_3585 (131 aa).

The interval 1-20 (MAQIPAGADRPGKLSRKQTG) is disordered.

The protein belongs to the UPF0102 family.

This chain is UPF0102 protein Ent638_3585, found in Enterobacter sp. (strain 638).